Reading from the N-terminus, the 605-residue chain is Adaptin medium chain homolog APM2 (605 aa).

The segment at 150–196 is disordered; the sequence is EEWSPGEESSSSSGSDSDSEYSNTNKRKDKKKKRKKKKGTKGKSVGK. Low complexity predominate over residues 155-171; that stretch reads GEESSSSSGSDSDSEYS. Residues 174–196 show a composition bias toward basic residues; it reads NKRKDKKKKRKKKKGTKGKSVGK. The region spanning 269 to 604 is the MHD domain; it reads KNEFFLDVIE…TVSDEEYAYI (336 aa).

The protein belongs to the adaptor complexes medium subunit family. As to quaternary structure, component of the AP-1R complex composed of at least APM2, APL4 and APS1. Interacts with MIL1. Interacts with APL2.

It is found in the golgi apparatus membrane. Its subcellular location is the early endosome membrane. The protein localises to the cytoplasmic vesicle. The protein resides in the clathrin-coated vesicle membrane. Its function is as follows. Component of the AP-1-related (AP-1R) complex, an adapter protein complex that mediates of cargo protein sorting in clathrin-coated vesicles. AP-1R has a specific role in SNARE SNC1 sorting. In contrast to the APM1-containing AP-1 complex, AP-1R is incapable of sorting CHS3. The sequence is that of Adaptin medium chain homolog APM2 (APM2) from Saccharomyces cerevisiae (strain ATCC 204508 / S288c) (Baker's yeast).